The following is a 271-amino-acid chain: 60 kDa heat shock protein, mitochondrial (271 aa).

Phosphoserine is present on residues Ser30 and Ser33. 50–54 (DGTTT) is a binding site for ATP. Lys83 is subject to N6-acetyllysine. N6-acetyllysine; alternate is present on residues Lys84, Lys97, and Lys112. N6-succinyllysine; alternate is present on residues Lys84, Lys97, and Lys112. Lys125 carries the post-translational modification N6-acetyllysine. Lys126 bears the N6-acetyllysine; alternate mark. Residue Lys126 is modified to N6-succinyllysine; alternate. Lys145 bears the N6-acetyllysine mark. The residue at position 175 (Lys175) is an N6-succinyllysine. An N6-acetyllysine mark is found at Lys188 and Lys237. ATP is bound at residue Gly257. N6-acetyllysine is present on Lys270.

The protein belongs to the chaperonin (HSP60) family. As to quaternary structure, homoheptamer arranged in a ring structure. The functional units of these chaperonins consist of heptameric rings of the large subunit Hsp60, which function as a back-to-back double ring. Interacts with 2 heptameric Hsp10 rings to form the symmetrical football complex. Interacts with HRAS. Interacts with ATAD3A. Interacts with ETFBKMT and EEF1AKMT3. Interacts with MFHAS1. As to expression, detected at higher levels in caput epididymal spermatazoa than in cauda epididymal spermatazoa (at protein level).

It is found in the mitochondrion matrix. It carries out the reaction ATP + H2O + a folded polypeptide = ADP + phosphate + an unfolded polypeptide.. Functionally, chaperonin implicated in mitochondrial protein import and macromolecular assembly. Together with Hsp10, facilitates the correct folding of imported proteins. May also prevent misfolding and promote the refolding and proper assembly of unfolded polypeptides generated under stress conditions in the mitochondrial matrix. The functional units of these chaperonins consist of heptameric rings of the large subunit Hsp60, which function as a back-to-back double ring. In a cyclic reaction, Hsp60 ring complexes bind one unfolded substrate protein per ring, followed by the binding of ATP and association with 2 heptameric rings of the co-chaperonin Hsp10. This leads to sequestration of the substrate protein in the inner cavity of Hsp60 where, for a certain period of time, it can fold undisturbed by other cell components. Synchronous hydrolysis of ATP in all Hsp60 subunits results in the dissociation of the chaperonin rings and the release of ADP and the folded substrate protein. In Mesocricetus auratus (Golden hamster), this protein is 60 kDa heat shock protein, mitochondrial.